We begin with the raw amino-acid sequence, 433 residues long: Beta-agarase AgaA (433 aa).

An N-terminal signal peptide occupies residues 1 to 20 (MRKITSILLTCVMGCTATYA). Residues 21-295 (ADWDGVPVPA…WVRFYKPVPI (275 aa)) enclose the GH16 domain. The Nucleophile role is filled by glutamate 147. Residue glutamate 152 is the Proton donor of the active site. Positions 300–431 (TTVELGNFHN…QWNGDEIRFV (132 aa)) constitute a CBM6 domain.

Belongs to the glycosyl hydrolase 16 family. As to quaternary structure, monomer.

The protein resides in the periplasm. It carries out the reaction Hydrolysis of (1-&gt;4)-beta-D-galactosidic linkages in agarose, giving the tetramer as the predominant product.. Its activity is regulated as follows. Activity is abolished by Hg(2+), Cu(2+), Pb(2+) and Zn(2+) ions, but is not affected by NaCl up to at least 1.0 M, Mg(2+), K(+) and Ca(2+). Not affected by iodoacetamide, p-chloromercuribenzoate, dithiothreitol, 2-mercaptoethanol, EDTA and sodium dodecyl sulfate. Inhibited by N-bromosuccinimide. Endo-type beta-agarase, which produces neoagarotetraose (NA4) as the main final product, with a small amount of neoagarohexaose (NA6) and neoagarobiose (NA2). This Microbulbifer thermotolerans protein is Beta-agarase AgaA.